A 405-amino-acid polypeptide reads, in one-letter code: Arginine biosynthesis bifunctional protein ArgJ (405 aa).

Substrate contacts are provided by threonine 152, lysine 178, threonine 189, glutamate 276, asparagine 400, and serine 405. The active-site Nucleophile is the threonine 189.

The protein belongs to the ArgJ family. As to quaternary structure, heterotetramer of two alpha and two beta chains.

The protein resides in the cytoplasm. The catalysed reaction is N(2)-acetyl-L-ornithine + L-glutamate = N-acetyl-L-glutamate + L-ornithine. The enzyme catalyses L-glutamate + acetyl-CoA = N-acetyl-L-glutamate + CoA + H(+). Its pathway is amino-acid biosynthesis; L-arginine biosynthesis; L-ornithine and N-acetyl-L-glutamate from L-glutamate and N(2)-acetyl-L-ornithine (cyclic): step 1/1. It participates in amino-acid biosynthesis; L-arginine biosynthesis; N(2)-acetyl-L-ornithine from L-glutamate: step 1/4. In terms of biological role, catalyzes two activities which are involved in the cyclic version of arginine biosynthesis: the synthesis of N-acetylglutamate from glutamate and acetyl-CoA as the acetyl donor, and of ornithine by transacetylation between N(2)-acetylornithine and glutamate. This Chromobacterium violaceum (strain ATCC 12472 / DSM 30191 / JCM 1249 / CCUG 213 / NBRC 12614 / NCIMB 9131 / NCTC 9757 / MK) protein is Arginine biosynthesis bifunctional protein ArgJ.